A 499-amino-acid chain; its full sequence is Glycerol kinase (499 aa).

T13 provides a ligand contact to ADP. Residues T13, T14, and S15 each coordinate ATP. A sn-glycerol 3-phosphate-binding site is contributed by T13. R17 is a binding site for ADP. R83, E84, Y135, and D245 together coordinate sn-glycerol 3-phosphate. Residues R83, E84, Y135, D245, and Q246 each coordinate glycerol. ADP is bound by residues T267 and G310. 4 residues coordinate ATP: T267, G310, Q314, and G411. ADP is bound by residues G411 and N415.

The protein belongs to the FGGY kinase family.

The enzyme catalyses glycerol + ATP = sn-glycerol 3-phosphate + ADP + H(+). Its pathway is polyol metabolism; glycerol degradation via glycerol kinase pathway; sn-glycerol 3-phosphate from glycerol: step 1/1. With respect to regulation, inhibited by fructose 1,6-bisphosphate (FBP). In terms of biological role, key enzyme in the regulation of glycerol uptake and metabolism. Catalyzes the phosphorylation of glycerol to yield sn-glycerol 3-phosphate. The sequence is that of Glycerol kinase from Stenotrophomonas maltophilia (strain R551-3).